The following is a 166-amino-acid chain: uncharacterized protein (166 aa).

The tract at residues 28 to 55 is disordered; it reads SRQVHPPWPVPCKSKLQEQDSSESKESK. Positions 42–55 are enriched in basic and acidic residues; it reads KLQEQDSSESKESK. The 97-residue stretch at 67 to 163 folds into the HTH araC/xylS-type domain; that stretch reads QNAMLYIENN…NYTPKQFKRT (97 aa). 2 DNA-binding regions (H-T-H motif) span residues 84–105 and 130–153; these read DTVA…KLAT and VTET…KKRT.

This is an uncharacterized protein from Pseudoalteromonas carrageenovora (Alteromonas carrageenovora).